Reading from the N-terminus, the 352-residue chain is Heat-inducible transcription repressor HrcA (352 aa).

This sequence belongs to the HrcA family.

Its function is as follows. Negative regulator of class I heat shock genes (grpE-dnaK-dnaJ and groELS operons). Prevents heat-shock induction of these operons. This is Heat-inducible transcription repressor HrcA from Latilactobacillus sakei (Lactobacillus sakei).